Consider the following 309-residue polypeptide: Haloalkane dehalogenase (309 aa).

The 112-residue stretch at 37–148 (PTVLFLHGNP…FERWEDFHQR (112 aa)) folds into the AB hydrolase-1 domain. Asp110 serves as the catalytic Nucleophile. The Proton donor role is filled by Glu134. The active-site Proton acceptor is His278.

The protein belongs to the haloalkane dehalogenase family. Type 2 subfamily. In terms of assembly, monomer.

It catalyses the reaction 1-haloalkane + H2O = a halide anion + a primary alcohol + H(+). Functionally, catalyzes hydrolytic cleavage of carbon-halogen bonds in halogenated aliphatic compounds, leading to the formation of the corresponding primary alcohols, halide ions and protons. The polypeptide is Haloalkane dehalogenase (Mesorhizobium japonicum (strain LMG 29417 / CECT 9101 / MAFF 303099) (Mesorhizobium loti (strain MAFF 303099))).